Reading from the N-terminus, the 438-residue chain is Argininosuccinate lyase (438 aa).

It belongs to the lyase 1 family. Argininosuccinate lyase subfamily.

It is found in the cytoplasm. The catalysed reaction is 2-(N(omega)-L-arginino)succinate = fumarate + L-arginine. Its pathway is amino-acid biosynthesis; L-arginine biosynthesis; L-arginine from L-ornithine and carbamoyl phosphate: step 3/3. The polypeptide is Argininosuccinate lyase (Clostridium tetani (strain Massachusetts / E88)).